A 530-amino-acid chain; its full sequence is Autoinducer-2 kinase (530 aa).

This sequence belongs to the FGGY kinase family.

It localises to the cytoplasm. The enzyme catalyses (S)-4,5-dihydroxypentane-2,3-dione + ATP = (2S)-2-hydroxy-3,4-dioxopentyl phosphate + ADP + H(+). Functionally, catalyzes the phosphorylation of autoinducer-2 (AI-2) to phospho-AI-2, which subsequently inactivates the transcriptional regulator LsrR and leads to the transcription of the lsr operon. Phosphorylates the ring-open form of (S)-4,5-dihydroxypentane-2,3-dione (DPD), which is the precursor to all AI-2 signaling molecules, at the C5 position. This Salmonella paratyphi A (strain ATCC 9150 / SARB42) protein is Autoinducer-2 kinase.